The sequence spans 328 residues: UPF0194 membrane protein YPTS_1292 (328 aa).

A signal peptide spans 1 to 22 (MNRKKIIVAAVIVALLATLAYG). 2 coiled-coil regions span residues 80 to 109 (YLNA…REEE) and 142 to 209 (AVSA…ILLA).

The protein belongs to the UPF0194 family.

Its subcellular location is the periplasm. The protein is UPF0194 membrane protein YPTS_1292 of Yersinia pseudotuberculosis serotype IB (strain PB1/+).